Consider the following 377-residue polypeptide: Alanine racemase (377 aa).

Lysine 33 (proton acceptor; specific for D-alanine) is an active-site residue. Lysine 33 is subject to N6-(pyridoxal phosphate)lysine. Position 134 (arginine 134) interacts with substrate. The active-site Proton acceptor; specific for L-alanine is the tyrosine 267. Methionine 315 serves as a coordination point for substrate.

This sequence belongs to the alanine racemase family. Pyridoxal 5'-phosphate is required as a cofactor.

The catalysed reaction is L-alanine = D-alanine. The protein operates within amino-acid biosynthesis; D-alanine biosynthesis; D-alanine from L-alanine: step 1/1. Functionally, catalyzes the interconversion of L-alanine and D-alanine. May also act on other amino acids. In Treponema pallidum subsp. pallidum (strain SS14), this protein is Alanine racemase (alr).